Consider the following 222-residue polypeptide: Protein-L-isoaspartate O-methyltransferase (222 aa).

Residue Ser-67 is part of the active site.

This sequence belongs to the methyltransferase superfamily. L-isoaspartyl/D-aspartyl protein methyltransferase family.

The protein localises to the cytoplasm. The enzyme catalyses [protein]-L-isoaspartate + S-adenosyl-L-methionine = [protein]-L-isoaspartate alpha-methyl ester + S-adenosyl-L-homocysteine. Catalyzes the methyl esterification of L-isoaspartyl residues in peptides and proteins that result from spontaneous decomposition of normal L-aspartyl and L-asparaginyl residues. It plays a role in the repair and/or degradation of damaged proteins. This is Protein-L-isoaspartate O-methyltransferase from Parvibaculum lavamentivorans (strain DS-1 / DSM 13023 / NCIMB 13966).